Reading from the N-terminus, the 226-residue chain is 2-C-methyl-D-erythritol 4-phosphate cytidylyltransferase (226 aa).

Belongs to the IspD/TarI cytidylyltransferase family. IspD subfamily.

It carries out the reaction 2-C-methyl-D-erythritol 4-phosphate + CTP + H(+) = 4-CDP-2-C-methyl-D-erythritol + diphosphate. The protein operates within isoprenoid biosynthesis; isopentenyl diphosphate biosynthesis via DXP pathway; isopentenyl diphosphate from 1-deoxy-D-xylulose 5-phosphate: step 2/6. Catalyzes the formation of 4-diphosphocytidyl-2-C-methyl-D-erythritol from CTP and 2-C-methyl-D-erythritol 4-phosphate (MEP). This Bacillus cytotoxicus (strain DSM 22905 / CIP 110041 / 391-98 / NVH 391-98) protein is 2-C-methyl-D-erythritol 4-phosphate cytidylyltransferase.